The chain runs to 30 residues: Protamine-YII (30 aa).

A disordered region spans residues 1-30 (PRRRTRRASRPVRRRRPRRVSRRRRARRRR).

Testis.

The protein resides in the nucleus. Its subcellular location is the chromosome. In terms of biological role, protamines substitute for histones in the chromatin of sperm during the haploid phase of spermatogenesis. They compact sperm DNA into a highly condensed, stable and inactive complex. The sequence is that of Protamine-YII from Clupea harengus (Atlantic herring).